We begin with the raw amino-acid sequence, 601 residues long: Probable Xaa-Pro aminopeptidase P (601 aa).

4 residues coordinate Mn(2+): D398, D409, E507, and E521.

It belongs to the peptidase M24B family. It depends on Mn(2+) as a cofactor.

The enzyme catalyses Release of any N-terminal amino acid, including proline, that is linked to proline, even from a dipeptide or tripeptide.. In terms of biological role, catalyzes the removal of a penultimate prolyl residue from the N-termini of peptides. The chain is Probable Xaa-Pro aminopeptidase P (ampp) from Sclerotinia sclerotiorum (strain ATCC 18683 / 1980 / Ss-1) (White mold).